Reading from the N-terminus, the 312-residue chain is MQSYKYDKAIVPESKNGGSPALNNNPRKGGSKRVLLICLDLFCLFMAALPFLIIETSTIKPYRRGFYCNDESIKYPLKVSETINDAVLCAVGIVIAILAIITGEFYRIYYLKEKSRSTTQNPYVAALYKQVGCFLFGCAISQSFTDIAKVSIGRLRPHFLSVCDPDFSQINCSEGYIQNYRCRGEDSKVQEARKSFFSGHASFSMFTMLYLVLYLQARFTWRGARLLRPLLQFTLLMMAFYTGLSRVSDYKHHPSDVLAGFAQGALVACCIVFFVSDLFKTKTSLSLPAPAIRREILSPVDIIDRNNHHNMV.

At 1-33 (MQSYKYDKAIVPESKNGGSPALNNNPRKGGSKR) the chain is on the cytoplasmic side. The residue at position 19 (Ser-19) is a Phosphoserine. Residues 34 to 54 (VLLICLDLFCLFMAALPFLII) traverse the membrane as a helical segment. Residues 55 to 85 (ETSTIKPYRRGFYCNDESIKYPLKVSETIND) are Extracellular-facing. Residues 86 to 106 (AVLCAVGIVIAILAIITGEFY) form a helical membrane-spanning segment. Topologically, residues 107–123 (RIYYLKEKSRSTTQNPY) are cytoplasmic. The Dityrosine basolateral targeting motif signature appears at 109 to 110 (YY). Residues 124–144 (VAALYKQVGCFLFGCAISQSF) traverse the membrane as a helical segment. Topologically, residues 145–194 (TDIAKVSIGRLRPHFLSVCDPDFSQINCSEGYIQNYRCRGEDSKVQEARK) are extracellular. The tract at residues 149-157 (KVSIGRLRP) is phosphatase sequence motif I. N-linked (GlcNAc...) asparagine glycosylation is present at Asn-171. Positions 183–185 (RGE) match the Integrin-binding motif motif. A helical transmembrane segment spans residues 195–215 (SFFSGHASFSMFTMLYLVLYL). A phosphatase sequence motif II region spans residues 197 to 200 (FSGH). His-200 (proton donors) is an active-site residue. Residues 216–226 (QARFTWRGARL) lie on the Cytoplasmic side of the membrane. Residues 227-244 (LRPLLQFTLLMMAFYTGL) form a helical membrane-spanning segment. The interval 245 to 256 (SRVSDYKHHPSD) is phosphatase sequence motif III. The Extracellular segment spans residues 245–258 (SRVSDYKHHPSDVL). His-252 functions as the Nucleophile in the catalytic mechanism. Residues 259 to 279 (AGFAQGALVACCIVFFVSDLF) form a helical membrane-spanning segment. A mediates interaction with CTNND1 region spans residues 276–312 (SDLFKTKTSLSLPAPAIRREILSPVDIIDRNNHHNMV). Residues 280-312 (KTKTSLSLPAPAIRREILSPVDIIDRNNHHNMV) lie on the Cytoplasmic side of the membrane.

The protein belongs to the PA-phosphatase related phosphoesterase family. As to quaternary structure, forms functional homodimers and homooligomers that are not required for substrate recognition and catalytic activity. Can also form heterooligomers with other PLPP2 and PLPP3. Interacts with CTNND1; negatively regulates the PLPP3-mediated stabilization of beta-catenin/CTNNB1. Post-translationally, N-glycosylated. Contains high-mannose oligosaccharides. In terms of tissue distribution, detected in lung, cerebellum and heart atrium.

Its subcellular location is the cell membrane. It is found in the basolateral cell membrane. The protein localises to the endoplasmic reticulum membrane. The protein resides in the endoplasmic reticulum-Golgi intermediate compartment membrane. It localises to the golgi apparatus membrane. Its subcellular location is the golgi apparatus. It is found in the trans-Golgi network membrane. The protein localises to the membrane raft. It catalyses the reaction a 1,2-diacyl-sn-glycero-3-phosphate + H2O = a 1,2-diacyl-sn-glycerol + phosphate. The enzyme catalyses 1,2-dihexadecanoyl-sn-glycero-3-phosphate + H2O = 1,2-dihexadecanoyl-sn-glycerol + phosphate. The catalysed reaction is 1,2-di-(9Z-octadecenoyl)-sn-glycero-3-phosphate + H2O = 1,2-di-(9Z-octadecenoyl)-sn-glycerol + phosphate. It carries out the reaction a monoacyl-sn-glycero-3-phosphate + H2O = a monoacylglycerol + phosphate. It catalyses the reaction (9Z)-octadecenoyl-sn-glycero-3-phosphate + H2O = (9Z-octadecenoyl)-glycerol + phosphate. The enzyme catalyses sphing-4-enine 1-phosphate + H2O = sphing-4-enine + phosphate. The catalysed reaction is an N-acylsphing-4-enine 1-phosphate + H2O = an N-acylsphing-4-enine + phosphate. It carries out the reaction N-(octanoyl)-sphing-4-enine-1-phosphate + H2O = N-octanoylsphing-4-enine + phosphate. It catalyses the reaction N-(9Z-octadecenoyl)-ethanolamine phosphate + H2O = N-(9Z-octadecenoyl) ethanolamine + phosphate. The protein operates within lipid metabolism; phospholipid metabolism. Magnesium-independent phospholipid phosphatase. Insensitive to N-ethylmaleimide. Its function is as follows. Magnesium-independent phospholipid phosphatase of the plasma membrane that catalyzes the dephosphorylation of a variety of glycerolipid and sphingolipid phosphate esters including phosphatidate/PA, lysophosphatidate/LPA, diacylglycerol pyrophosphate/DGPP, sphingosine 1-phosphate/S1P and ceramide 1-phosphate/C1P. Also acts on N-oleoyl ethanolamine phosphate/N-(9Z-octadecenoyl)-ethanolamine phosphate, a potential physiological compound. Has both an extracellular and an intracellular phosphatase activity, allowing the hydrolysis and the cellular uptake of these bioactive lipid mediators from the milieu, regulating signal transduction in different cellular processes. Through the dephosphorylation of extracellular sphingosine-1-phosphate and the regulation of its extra- and intracellular availability, plays a role in vascular homeostasis, regulating endothelial cell migration, adhesion, survival, proliferation and the production of pro-inflammatory cytokines. By maintaining the appropriate levels of this lipid in the cerebellum, also ensure its proper development and function. Through its intracellular lipid phosphatase activity may act in early compartments of the secretory pathway, regulating the formation of Golgi to endoplasmic reticulum retrograde transport carriers. In terms of biological role, independently of this phosphatase activity may also function in the Wnt signaling pathway and the stabilization of beta-catenin/CTNNB1, thereby regulating cell proliferation, migration and differentiation in angiogenesis or yet in tumor growth. Also plays a role in integrin-mediated cell-cell adhesion in angiogenesis. The sequence is that of Phospholipid phosphatase 3 from Mus musculus (Mouse).